Here is a 441-residue protein sequence, read N- to C-terminus: 4-alpha-glucanotransferase (441 aa).

Positions 13, 15, 17, 19, and 21 each coordinate Ca(2+). The active-site Nucleophile is the D186. E216 serves as the catalytic Proton donor.

This sequence belongs to the glycosyl hydrolase 13 family. As to quaternary structure, monomer. Ca(2+) is required as a cofactor.

Its subcellular location is the cytoplasm. It catalyses the reaction Transfers a segment of a (1-&gt;4)-alpha-D-glucan to a new position in an acceptor, which may be glucose or a (1-&gt;4)-alpha-D-glucan.. In Thermotoga maritima (strain ATCC 43589 / DSM 3109 / JCM 10099 / NBRC 100826 / MSB8), this protein is 4-alpha-glucanotransferase (mgtA).